The chain runs to 338 residues: Phenylalanine--tRNA ligase alpha subunit (338 aa).

Glutamate 253 is a binding site for Mg(2+).

This sequence belongs to the class-II aminoacyl-tRNA synthetase family. Phe-tRNA synthetase alpha subunit type 1 subfamily. Tetramer of two alpha and two beta subunits. It depends on Mg(2+) as a cofactor.

It localises to the cytoplasm. The catalysed reaction is tRNA(Phe) + L-phenylalanine + ATP = L-phenylalanyl-tRNA(Phe) + AMP + diphosphate + H(+). This chain is Phenylalanine--tRNA ligase alpha subunit, found in Syntrophus aciditrophicus (strain SB).